Consider the following 351-residue polypeptide: Phosphoribosylformylglycinamidine cyclo-ligase (351 aa).

This sequence belongs to the AIR synthase family.

Its subcellular location is the cytoplasm. It catalyses the reaction 2-formamido-N(1)-(5-O-phospho-beta-D-ribosyl)acetamidine + ATP = 5-amino-1-(5-phospho-beta-D-ribosyl)imidazole + ADP + phosphate + H(+). It functions in the pathway purine metabolism; IMP biosynthesis via de novo pathway; 5-amino-1-(5-phospho-D-ribosyl)imidazole from N(2)-formyl-N(1)-(5-phospho-D-ribosyl)glycinamide: step 2/2. The sequence is that of Phosphoribosylformylglycinamidine cyclo-ligase from Xylella fastidiosa (strain 9a5c).